We begin with the raw amino-acid sequence, 1438 residues long: DNA-directed RNA polymerase subunit beta' (1438 aa).

C70, C72, C85, and C88 together coordinate Zn(2+). Residues D461, D463, and D465 each coordinate Mg(2+). Zn(2+) contacts are provided by C821, C895, C902, and C905. The span at 1413–1427 (DAMAAAMGGDSAGGD) shows a compositional bias: low complexity. Positions 1413–1438 (DAMAAAMGGDSAGGDTKPEAPEASEE) are disordered.

The protein belongs to the RNA polymerase beta' chain family. The RNAP catalytic core consists of 2 alpha, 1 beta, 1 beta' and 1 omega subunit. When a sigma factor is associated with the core the holoenzyme is formed, which can initiate transcription. Mg(2+) is required as a cofactor. Zn(2+) serves as cofactor.

It catalyses the reaction RNA(n) + a ribonucleoside 5'-triphosphate = RNA(n+1) + diphosphate. Functionally, DNA-dependent RNA polymerase catalyzes the transcription of DNA into RNA using the four ribonucleoside triphosphates as substrates. This is DNA-directed RNA polymerase subunit beta' from Erythrobacter litoralis (strain HTCC2594).